The following is an 898-amino-acid chain: Chaperone protein ClpB 1 (898 aa).

The 143-residue stretch at 6 to 148 (PTKFTEQAWD…ELAIKAIRGS (143 aa)) folds into the Clp R domain. Repeat regions lie at residues 9 to 74 (FTEQ…TNRQ) and 85 to 148 (LGRS…IRGS). An NBD1 region spans residues 161 to 344 (EALDKYGRDL…RRFQQVYVKQ (184 aa)). Residue 208 to 215 (GEPGVGKT) coordinates ATP. Positions 345–560 (PSVDDTISIL…IAEIVAGWTG (216 aa)) are linker. Positions 395–536 (IDLVDEAAAR…KESKLLEIQG (142 aa)) form a coiled coil. An NBD2 region spans residues 570–781 (ERQKLLQLEG…RIDDLIIFHT (212 aa)). ATP is bound at residue 620 to 627 (GPTGVGKT). A C-terminal region spans residues 782-898 (LKRDELRRIV…TAVEVEVLSS (117 aa)).

Belongs to the ClpA/ClpB family. In terms of assembly, homohexamer. The oligomerization is ATP-dependent.

It localises to the cytoplasm. Its function is as follows. Part of a stress-induced multi-chaperone system, it is involved in the recovery of the cell from heat-induced damage, in cooperation with DnaK, DnaJ and GrpE. Acts before DnaK, in the processing of protein aggregates. Protein binding stimulates the ATPase activity; ATP hydrolysis unfolds the denatured protein aggregates, which probably helps expose new hydrophobic binding sites on the surface of ClpB-bound aggregates, contributing to the solubilization and refolding of denatured protein aggregates by DnaK. The protein is Chaperone protein ClpB 1 (clpB1) of Synechocystis sp. (strain ATCC 27184 / PCC 6803 / Kazusa).